The chain runs to 201 residues: tRNA (guanine-N(7)-)-methyltransferase (201 aa).

Residues E34, E59, D86, and D107 each coordinate S-adenosyl-L-methionine. The active site involves D107. Substrate-binding positions include K111, D143, and 181 to 184; that span reads TDYE.

This sequence belongs to the class I-like SAM-binding methyltransferase superfamily. TrmB family.

The enzyme catalyses guanosine(46) in tRNA + S-adenosyl-L-methionine = N(7)-methylguanosine(46) in tRNA + S-adenosyl-L-homocysteine. It functions in the pathway tRNA modification; N(7)-methylguanine-tRNA biosynthesis. In terms of biological role, catalyzes the formation of N(7)-methylguanine at position 46 (m7G46) in tRNA. This is tRNA (guanine-N(7)-)-methyltransferase from Mycoplasma mobile (strain ATCC 43663 / 163K / NCTC 11711) (Mesomycoplasma mobile).